We begin with the raw amino-acid sequence, 336 residues long: tRNA N6-adenosine threonylcarbamoyltransferase (336 aa).

Positions 112 and 116 each coordinate Fe cation. Substrate-binding positions include 136–140, Asp-169, Gly-182, and Asn-276; that span reads LVSGG. Asp-304 contributes to the Fe cation binding site.

Belongs to the KAE1 / TsaD family. Fe(2+) serves as cofactor.

The protein localises to the cytoplasm. It carries out the reaction L-threonylcarbamoyladenylate + adenosine(37) in tRNA = N(6)-L-threonylcarbamoyladenosine(37) in tRNA + AMP + H(+). Functionally, required for the formation of a threonylcarbamoyl group on adenosine at position 37 (t(6)A37) in tRNAs that read codons beginning with adenine. Is involved in the transfer of the threonylcarbamoyl moiety of threonylcarbamoyl-AMP (TC-AMP) to the N6 group of A37, together with TsaE and TsaB. TsaD likely plays a direct catalytic role in this reaction. The sequence is that of tRNA N6-adenosine threonylcarbamoyltransferase from Francisella tularensis subsp. holarctica (strain FTNF002-00 / FTA).